A 505-amino-acid chain; its full sequence is Maturase K (505 aa).

It belongs to the intron maturase 2 family. MatK subfamily.

It localises to the plastid. It is found in the chloroplast. Functionally, usually encoded in the trnK tRNA gene intron. Probably assists in splicing its own and other chloroplast group II introns. The polypeptide is Maturase K (Phaulothamnus spinescens (Snake-eyes)).